A 907-amino-acid polypeptide reads, in one-letter code: Protein translocase subunit SecA (907 aa).

ATP-binding positions include Gln87, 105 to 109 (GEGKT), and Asp506. Positions 834-850 (LEQQREEEAREQAEKMK) are enriched in basic and acidic residues. The interval 834–907 (LEQQREEEAR…KYKQCHGKIE (74 aa)) is disordered. Over residues 864–875 (QPQPSQQQGEQP) the composition is skewed to low complexity. Zn(2+) is bound by residues Cys891, Cys893, Cys902, and His903. The span at 897 to 907 (KKYKQCHGKIE) shows a compositional bias: basic residues.

Belongs to the SecA family. Monomer and homodimer. Part of the essential Sec protein translocation apparatus which comprises SecA, SecYEG and auxiliary proteins SecDF-YajC and YidC. Requires Zn(2+) as cofactor.

It is found in the cell inner membrane. It localises to the cytoplasm. It carries out the reaction ATP + H2O + cellular proteinSide 1 = ADP + phosphate + cellular proteinSide 2.. Its function is as follows. Part of the Sec protein translocase complex. Interacts with the SecYEG preprotein conducting channel. Has a central role in coupling the hydrolysis of ATP to the transfer of proteins into and across the cell membrane, serving both as a receptor for the preprotein-SecB complex and as an ATP-driven molecular motor driving the stepwise translocation of polypeptide chains across the membrane. This Alcanivorax borkumensis (strain ATCC 700651 / DSM 11573 / NCIMB 13689 / SK2) protein is Protein translocase subunit SecA.